A 142-amino-acid chain; its full sequence is Coactosin-like protein (142 aa).

Ala2 is modified (N-acetylalanine). One can recognise an ADF-H domain in the interval 2-130 (ATKIDKEACR…EEDFIKNELK (129 aa)). The segment at 66–75 (TGDAMSKRSK) is flexible and important for F-actin binding. Residues Lys102 and Lys126 each carry the N6-acetyllysine modification.

The protein belongs to the actin-binding proteins ADF family. Coactosin subfamily. Interacts with 5-lipoxygenase (ALOX5/5LO) in a calcium-independent manner. Binds to F-actin with a stoichiometry of 1:2.

The protein localises to the cytoplasm. The protein resides in the cytoskeleton. It localises to the nucleus. Binds to F-actin in a calcium-independent manner. Has no direct effect on actin depolymerization. Acts as a chaperone for ALOX5 (5LO), influencing both its stability and activity in leukotrienes synthesis. This Bos taurus (Bovine) protein is Coactosin-like protein (COTL1).